Here is a 95-residue protein sequence, read N- to C-terminus: SMAD5 antisense gene protein 1 (95 aa).

Disordered stretches follow at residues 1 to 24 and 43 to 70; these read MHKQ…SSWS and SSPT…KPAN. The segment covering 7–19 has biased composition (pro residues); the sequence is LLPPPATPPPPPQ.

As to expression, expressed in fetal tissues.

This chain is SMAD5 antisense gene protein 1 (SMAD5-AS1), found in Homo sapiens (Human).